Consider the following 392-residue polypeptide: Outer membrane protein assembly factor BamB (392 aa).

An N-terminal signal peptide occupies residues 1–19 (MQLRKLLLPGLLSVTLLSG). Residue cysteine 20 is the site of N-palmitoyl cysteine attachment. Cysteine 20 carries the S-diacylglycerol cysteine lipid modification.

This sequence belongs to the BamB family. In terms of assembly, part of the Bam complex, which is composed of the outer membrane protein BamA, and four lipoproteins BamB, BamC, BamD and BamE. Monomer. Interacts directly with BamA. The Bam complex has the shape of a hat, with the BamA beta-barrel crown in the outer membrane and the periplasmic brim formed by the BamA POTRA domains and the 4 lipoproteins.

It is found in the cell outer membrane. Its function is as follows. Part of the outer membrane protein assembly complex (Bam), which is involved in assembly and insertion of beta-barrel proteins into the outer membrane. Nonessential member of the complex, which may orient the flexible periplasmic domain of BamA for interaction with other Bam components, chaperones and nascent outer membrane proteins. Efficient substrate folding and insertion into the outer membrane requires all 5 subunits. A lateral gate may open between the first and last strands of the BamA beta-barrel that allows substrate to insert into the outer membrane; comparison of the structures of complete and nearly complete Bam complexes show there is considerable movement of all 5 proteins. In Escherichia coli (strain K12), this protein is Outer membrane protein assembly factor BamB.